A 257-amino-acid polypeptide reads, in one-letter code: MTAAPRNPLIVIPARLAASRLPDKPLADIHGRPMIAHVLDRAREADIGPVVVACADAAIADAVAAAGGRAVLTDPAHPSGSDRVWEAVCRVDPDGRHDAVVNVQGDLPTIDPAAVRAVFGPLARPGTDIATLAAEIVRVEERTDPNVVKAVVELAPGARDGRALYFTRATAPWGEGPLFHHIGLYAYRREALARFVALPPAALERREKLEQLRALAAGMTIAVAIVDTVPLGVDTAADLERARALLDPRTGARPALP.

This sequence belongs to the KdsB family.

Its subcellular location is the cytoplasm. It catalyses the reaction 3-deoxy-alpha-D-manno-oct-2-ulosonate + CTP = CMP-3-deoxy-beta-D-manno-octulosonate + diphosphate. The protein operates within nucleotide-sugar biosynthesis; CMP-3-deoxy-D-manno-octulosonate biosynthesis; CMP-3-deoxy-D-manno-octulosonate from 3-deoxy-D-manno-octulosonate and CTP: step 1/1. It functions in the pathway bacterial outer membrane biogenesis; lipopolysaccharide biosynthesis. Functionally, activates KDO (a required 8-carbon sugar) for incorporation into bacterial lipopolysaccharide in Gram-negative bacteria. In Rhodospirillum centenum (strain ATCC 51521 / SW), this protein is 3-deoxy-manno-octulosonate cytidylyltransferase.